A 216-amino-acid chain; its full sequence is Adenylate kinase (216 aa).

10-15 (GAGKGT) serves as a coordination point for ATP. The segment at 30–59 (STGDMLRAAVKAGTELGIKAKSIMDAGGLV) is NMP. AMP is bound by residues threonine 31, arginine 36, 57–59 (GLV), 85–88 (GFPR), and glutamine 92. The tract at residues 122–159 (GRRVHEASGRVYHIVYNPPKIAGKDDITGEELVQRKDD) is LID. Residues arginine 123 and 132-133 (VY) each bind ATP. Positions 156 and 167 each coordinate AMP. Glycine 202 is an ATP binding site.

Belongs to the adenylate kinase family. In terms of assembly, monomer.

The protein resides in the cytoplasm. It carries out the reaction AMP + ATP = 2 ADP. It functions in the pathway purine metabolism; AMP biosynthesis via salvage pathway; AMP from ADP: step 1/1. Functionally, catalyzes the reversible transfer of the terminal phosphate group between ATP and AMP. Plays an important role in cellular energy homeostasis and in adenine nucleotide metabolism. The sequence is that of Adenylate kinase from Pseudomonas fluorescens (strain Pf0-1).